Consider the following 349-residue polypeptide: MKAKLILENGVVFEGKAFGYLKECVGEVVFNTGMTGYQEVLTDPSYYGQIVTMTYPLIGNYGINLEDLESKEPKVRGFIVREKCQYPNNFRCELELETYLAQNKVLGLDGIDTRALTKILRNNGTMKGIIVLDNSNLEDVKDKLEAFSNRDAVSIVSTNEKYEISGEGKKVAIIDFGIKQNIIRNFVKRGCNVTVFPYDFKAEEVLEINPDLVFLSNGPGDPEDMGEAVNEIKKIVGKKPIVGICLGHQLLALTLGGETKKLKFGHRGCNHPVKDLINNRVHITSQNHGYYVATLPENMEITHVSMNDGTVEGMKHKELPIFSVQFHPEACPGPKDSEYIFDEFMKYAL.

The interval 1 to 170 (MKAKLILENG…KYEISGEGKK (170 aa)) is CPSase. L-glutamine contacts are provided by S45, G218, and G220. Positions 170–349 (KVAIIDFGIK…IFDEFMKYAL (180 aa)) constitute a Glutamine amidotransferase type-1 domain. Catalysis depends on C245, which acts as the Nucleophile. 5 residues coordinate L-glutamine: L246, Q249, N287, G289, and Y290. Catalysis depends on residues H327 and E329.

Belongs to the CarA family. Composed of two chains; the small (or glutamine) chain promotes the hydrolysis of glutamine to ammonia, which is used by the large (or ammonia) chain to synthesize carbamoyl phosphate. Tetramer of heterodimers (alpha,beta)4.

The catalysed reaction is hydrogencarbonate + L-glutamine + 2 ATP + H2O = carbamoyl phosphate + L-glutamate + 2 ADP + phosphate + 2 H(+). It carries out the reaction L-glutamine + H2O = L-glutamate + NH4(+). It participates in amino-acid biosynthesis; L-arginine biosynthesis; carbamoyl phosphate from bicarbonate: step 1/1. It functions in the pathway pyrimidine metabolism; UMP biosynthesis via de novo pathway; (S)-dihydroorotate from bicarbonate: step 1/3. In terms of biological role, small subunit of the glutamine-dependent carbamoyl phosphate synthetase (CPSase). CPSase catalyzes the formation of carbamoyl phosphate from the ammonia moiety of glutamine, carbonate, and phosphate donated by ATP, constituting the first step of 2 biosynthetic pathways, one leading to arginine and/or urea and the other to pyrimidine nucleotides. The small subunit (glutamine amidotransferase) binds and cleaves glutamine to supply the large subunit with the substrate ammonia. This chain is Carbamoyl phosphate synthase small chain, found in Clostridium perfringens (strain 13 / Type A).